A 219-amino-acid polypeptide reads, in one-letter code: uncharacterized protein (219 aa).

Positions 1–17 (MIINNQNSPQSINTPSS) are enriched in low complexity. The segment at 1-31 (MIINNQNSPQSINTPSSVSSRQHINKSKKKK) is disordered. 2 helical membrane-spanning segments follow: residues 49-69 (SLATVFGVIGGLVLGIVLVCK) and 83-105 (LVYRIVGIFLSAGTGGNLSSYIG). The disordered stretch occupies residues 135–219 (NHRSPIPLTN…NSDLEIPIPI (85 aa)). The segment covering 144-212 (NLNNNNNNNN…SNNNNDNNSD (69 aa)) has biased composition (low complexity).

The protein resides in the membrane. This is an uncharacterized protein from Dictyostelium discoideum (Social amoeba).